The primary structure comprises 336 residues: NADH-quinone oxidoreductase subunit H (336 aa).

8 consecutive transmembrane segments (helical) span residues 4 to 24 (YILW…LVVA), 75 to 95 (YLFF…WAVI), 108 to 128 (LGLL…VIAG), 154 to 174 (MGFA…TGII), 181 to 201 (LWHW…IAGI), 233 to 253 (LFFL…SIMF), 272 to 292 (FVPG…MFLW), and 308 to 328 (LGWK…ACMV).

Belongs to the complex I subunit 1 family. In terms of assembly, NDH-1 is composed of 14 different subunits. Subunits NuoA, H, J, K, L, M, N constitute the membrane sector of the complex.

The protein resides in the cell inner membrane. It carries out the reaction a quinone + NADH + 5 H(+)(in) = a quinol + NAD(+) + 4 H(+)(out). In terms of biological role, NDH-1 shuttles electrons from NADH, via FMN and iron-sulfur (Fe-S) centers, to quinones in the respiratory chain. The immediate electron acceptor for the enzyme in this species is believed to be ubiquinone. Couples the redox reaction to proton translocation (for every two electrons transferred, four hydrogen ions are translocated across the cytoplasmic membrane), and thus conserves the redox energy in a proton gradient. This subunit may bind ubiquinone. This Francisella philomiragia subsp. philomiragia (strain ATCC 25017 / CCUG 19701 / FSC 153 / O#319-036) protein is NADH-quinone oxidoreductase subunit H.